The sequence spans 363 residues: L-arabinitol 4-dehydrogenase (363 aa).

The Zn(2+) site is built by cysteine 53, histidine 78, glutamate 79, cysteine 108, cysteine 111, cysteine 114, cysteine 122, and glutamate 163. NAD(+)-binding positions include proline 190 to isoleucine 191, aspartate 211, arginine 216, isoleucine 282, and glutamine 306 to arginine 308.

This sequence belongs to the zinc-containing alcohol dehydrogenase family. In terms of assembly, homotetramer. Zn(2+) serves as cofactor.

The catalysed reaction is L-arabinitol + NAD(+) = L-xylulose + NADH + H(+). It functions in the pathway carbohydrate degradation; L-arabinose degradation via L-arabinitol; D-xylulose 5-phosphate from L-arabinose (fungal route): step 2/5. Its function is as follows. Catalyzes the NAD-dependent oxidation of L-arabinitol to L-xylulose in the fungal L-arabinose catabolic pathway. L-arabinose catabolism is important for using plant material as a carbon source. Not active on D-arabinitol, D-sorbitol and D-mannitol. This is L-arabinitol 4-dehydrogenase (ard-1) from Neurospora crassa (strain ATCC 24698 / 74-OR23-1A / CBS 708.71 / DSM 1257 / FGSC 987).